Consider the following 460-residue polypeptide: Argininosuccinate lyase (460 aa).

Belongs to the lyase 1 family. Argininosuccinate lyase subfamily.

It is found in the cytoplasm. It catalyses the reaction 2-(N(omega)-L-arginino)succinate = fumarate + L-arginine. Its pathway is amino-acid biosynthesis; L-arginine biosynthesis; L-arginine from L-ornithine and carbamoyl phosphate: step 3/3. The chain is Argininosuccinate lyase from Sulfurimonas denitrificans (strain ATCC 33889 / DSM 1251) (Thiomicrospira denitrificans (strain ATCC 33889 / DSM 1251)).